The following is a 1453-amino-acid chain: NK-tumor recognition protein (1453 aa).

The region spanning 10 to 175 (HFDIEINREP…ADVRVIDCGV (166 aa)) is the PPIase cyclophilin-type domain. Positions 187–625 (KKRKKPTCSE…RWKPGQKPWK (439 aa)) are disordered. A compositionally biased stretch (low complexity) spans 195 to 213 (SEGSDSSSRSSSSSESSSE). Over residues 221–240 (IRRRRHKRRPKVRHAKKRRK) the composition is skewed to basic residues. The span at 259–286 (YSERSDVNEKRSVDSNTKREKPVVRPEE) shows a compositional bias: basic and acidic residues. Lys323 is covalently cross-linked (Glycyl lysine isopeptide (Lys-Gly) (interchain with G-Cter in SUMO2)). Residues 329–348 (SGRKIKGRGTIRYHTPPRSR) show a composition bias toward basic residues. 3 positions are modified to phosphoserine: Ser379, Ser401, and Ser416. Over residues 382–402 (KWSKGDKLSDPCSSRWDERSL) the composition is skewed to basic and acidic residues. A compositionally biased stretch (polar residues) spans 403–421 (SQRSRSWSYNGYYSDLSTA). The span at 425 to 460 (DGHHKKHRKEKKFKHKKKAKKQKHCRRHRQTKKRRI) shows a compositional bias: basic residues. Positions 514-531 (SSRDSYRSKSHSRSDSRG) are enriched in basic and acidic residues. Low complexity-rich tracts occupy residues 532–546 (SSRSRAVSKSSSRSL) and 554–565 (SSRSGPRRTSIS). Glycyl lysine isopeptide (Lys-Gly) (interchain with G-Cter in SUMO2) cross-links involve residues Lys576 and Lys579. Ser611 carries the post-translational modification Phosphoserine. A Glycyl lysine isopeptide (Lys-Gly) (interchain with G-Cter in SUMO2) cross-link involves residue Lys637. Ser646 carries the post-translational modification Phosphoserine. Over residues 651–661 (TNIKATVSSSS) the composition is skewed to polar residues. Residues 651–1453 (TNIKATVSSS…RSPSESSRYS (803 aa)) are disordered. Glycyl lysine isopeptide (Lys-Gly) (interchain with G-Cter in SUMO2) cross-links involve residues Lys654 and Lys664. 2 stretches are compositionally biased toward low complexity: residues 682–726 (RSSG…SSRS) and 736–749 (SQHSRSSSYTSVSS). Over residues 755–772 (AMFRSNRKKSVTSHKRHR) the composition is skewed to basic residues. Over residues 773-789 (SNSEKTLHSKYVRGREK) the composition is skewed to basic and acidic residues. Over residues 799 to 809 (SRSSLDYSSDS) the composition is skewed to low complexity. Composition is skewed to basic and acidic residues over residues 820–852 (PEKEKQGKVEALNDKQGKGREEGKPKPEWECPR) and 859–868 (KDHSRDDSVS). Ser880, Ser882, Ser884, and Ser900 each carry phosphoserine. Residues 887–902 (DVTKSRKSDPRRGSEK) are compositionally biased toward basic and acidic residues. Acidic residues predominate over residues 903–913 (EEGEASSDSES). Positions 948 to 958 (SSASESESSCS) are enriched in low complexity. Residues 966-982 (EPQKQKHSKDDLKGDHT) show a composition bias toward basic and acidic residues. The span at 983-1005 (KRAREKSKAKKDKKHKAPKRKQA) shows a compositional bias: basic residues. Positions 1030 to 1045 (DPKEKRHVSEKCEAVK) are enriched in basic and acidic residues. Ser1139 and Ser1148 each carry phosphoserine. Residues 1170-1180 (QESSMSESKTL) show a composition bias toward polar residues. Residues 1189 to 1199 (SSTSVTSPVET) show a composition bias toward low complexity. Residue Ser1195 is modified to Phosphoserine. Residues Lys1208 and Lys1249 each participate in a glycyl lysine isopeptide (Lys-Gly) (interchain with G-Cter in SUMO2) cross-link. The interval 1303–1453 (RSPHRSRSKS…RSPSESSRYS (151 aa)) is arg/Ser tandem repeat-rich. A compositionally biased stretch (low complexity) spans 1322 to 1346 (SVSYSHSRSRSRSSTSSYRSRSYSR). Positions 1369-1379 (HSHRTSSRSRS) are enriched in basic residues. Positions 1380-1401 (RSSSYDLHSRSRSYTYDSYYSR) are enriched in low complexity. Basic residues predominate over residues 1416 to 1426 (RGRSYNRRSRS).

The protein localises to the cell membrane. It carries out the reaction [protein]-peptidylproline (omega=180) = [protein]-peptidylproline (omega=0). With respect to regulation, inhibited by cyclosporin A (CsA). Its function is as follows. PPIase that catalyzes the cis-trans isomerization of proline imidic peptide bonds in oligopeptides and may therefore assist protein folding. Component of a putative tumor-recognition complex involved in the function of NK cells. This is NK-tumor recognition protein from Mus musculus (Mouse).